We begin with the raw amino-acid sequence, 1525 residues long: Multidrug resistance protein mrp-7 (1525 aa).

The Extracellular portion of the chain corresponds to 1-24 (MLSSFCGDGHPFSTGLPNVSICAQ). N-linked (GlcNAc...) asparagine glycosylation occurs at N18. The chain crosses the membrane as a helical span at residues 25-45 (HTVLVWVPAAFFLLTLPFLSA). The Cytoplasmic portion of the chain corresponds to 46–66 (QCHLTAQRFARLPFSAHFIIK). A helical membrane pass occupies residues 67–87 (LLLVAFLAANSLATWCYVLFS). At 88–94 (KNSYAAA) the chain is on the extracellular side. A helical membrane pass occupies residues 95–115 (YYVYPGLWVLVWTGTFLVHLI). At 116–118 (RLR) the chain is on the cytoplasmic side. A helical transmembrane segment spans residues 119 to 139 (CGLVSSGIQHVTSLIFLLCGA). At 140–165 (PEFYQWIRMENSNSFPNDLTTTDSAQ) the chain is on the extracellular side. The helical transmembrane segment at 166–186 (FLSIAYLSWYSALILYTFSLC) threads the bilayer. Residues 187–346 (FADPRGAKTD…APFWKGMALS (160 aa)) lie on the Cytoplasmic side of the membrane. The region spanning 305–587 (LLASTLKFVS…IALLINQAVQ (283 aa)) is the ABC transmembrane type-1 1 domain. The chain crosses the membrane as a helical span at residues 347–367 (ILMFSVSELRSLILNGYFYIM). Residues 368 to 434 (FRMGTKIQTS…SCPYQITFAL (67 aa)) are Extracellular-facing. Residues 435–455 (VYLFITLGYSALPGVVIMVIF) traverse the membrane as a helical segment. Residues 456–535 (VPMNIISSMI…NILDSFNTAS (80 aa)) lie on the Cytoplasmic side of the membrane. The helical transmembrane segment at 536 to 556 (PFLVALFSFGTFVLSNPSHLL) threads the bilayer. The Extracellular portion of the chain corresponds to 557–561 (TPQIA). The chain crosses the membrane as a helical span at residues 562-582 (FVSLALFNQLRSPMTMIALLI). At 583 to 953 (NQAVQAVVSN…ATYQLYVKAA (371 aa)) the chain is on the cytoplasmic side. The ABC transporter 1 domain maps to 622-849 (VRVENLTASW…RGLFFDFMEE (228 aa)). 659–666 (GKVGSGKS) contacts ATP. The segment at 900-925 (ELTTQISTMSSPEKPPTGTSPAAATE) is disordered. A helical membrane pass occupies residues 954–974 (GYLLSIAFIGFFIVYMTLQIL). The ABC transmembrane type-1 2 domain maps to 959 to 1245 (IAFIGFFIVY…AVRQVSEIEA (287 aa)). The Extracellular portion of the chain corresponds to 975–1005 (RSFWLSAWSDEYDPDSPSAHPMAKGWRLGVY). A helical transmembrane segment spans residues 1006–1026 (GALGFSETACFFVALLALVFV). Over 1027–1068 (GQRASKNLHGPLIHNLMRSPMSFYDTTPLGRILNRCAKDIET) the chain is Cytoplasmic. A helical membrane pass occupies residues 1069–1089 (IDMMLPMNFRYLVMCVLQVAF). A topological domain (extracellular) is located at residue T1090. Residues 1091-1111 (LIVIIISTPLFAVVILPLALI) traverse the membrane as a helical segment. The Cytoplasmic portion of the chain corresponds to 1112–1184 (YLIFLRYYVP…RYSSLVSNRW (73 aa)). The chain crosses the membrane as a helical span at residues 1185–1205 (LAVRLEFVGNCIIFFAALFAV). The Extracellular segment spans residues 1206–1525 (LSKEFGWITS…ADAAEQDKHE (320 aa)). N1228 is a glycosylation site (N-linked (GlcNAc...) asparagine). The ABC transporter 2 domain maps to 1282-1516 (VKFDGYSTRY…KNSAFAKMVA (235 aa)). ATP is bound at residue 1316–1323 (GRTGAGKS). N-linked (GlcNAc...) asparagine glycosylation is found at N1358 and N1418.

It belongs to the ABC transporter superfamily. ABCC family. Conjugate transporter (TC 3.A.1.208) subfamily. Expressed in head neurons, including the dopamine (DA) motor neuron, and other cells in the body.

It is found in the cell membrane. Negatively regulates cellular toxicity by mediating the export of environmental toxicants such as methylmercury out of the cell. Plays a role in inhibiting methylmercury-induced dopamine (DA) motor neuron degeneration. Not involved in Mn(2+)- or Al(3+)-associated toxicity. The chain is Multidrug resistance protein mrp-7 from Caenorhabditis elegans.